The following is a 2754-amino-acid chain: Neurobeachin-like protein 2 (2754 aa).

Disordered stretches follow at residues 1298–1338 and 1364–1438; these read TAGS…SEAP and SVGS…QQTS. Composition is skewed to pro residues over residues 1301–1323 and 1388–1400; these read SPPP…PPTE and TPSP…PFPA. A compositionally biased stretch (polar residues) spans 1425–1437; sequence GDDTSNTSNPQQT. Position 1647 is a phosphoserine (S1647). The residue at position 1867 (T1867) is a Phosphothreonine. A BEACH-type PH domain is found at 1915-2040; it reads EQREKLVLSA…VRNQVYSWLL (126 aa). A BEACH domain is found at 2053–2345; that stretch reads RSPQEMLRAS…QLLKEPHPTR (293 aa). 7 WD repeats span residues 2386–2424, 2448–2491, 2494–2531, 2544–2582, 2589–2631, 2639–2674, and 2682–2717; these read LVLA…SWLP, RLLS…ALPR, LLSQ…VWRL, KPVQ…IHTV, AALR…TYSL, KLRA…ILQL, and PPLP…VVAG. S2739 and S2742 each carry phosphoserine.

The protein belongs to the WD repeat neurobeachin family. In terms of tissue distribution, expressed in megakaryocytes.

It localises to the endoplasmic reticulum. Probably involved in thrombopoiesis. Plays a role in the development or secretion of alpha-granules, that contain several growth factors important for platelet biogenesis. This Homo sapiens (Human) protein is Neurobeachin-like protein 2 (NBEAL2).